The chain runs to 340 residues: L-threonine 3-dehydrogenase (340 aa).

Residue cysteine 38 coordinates Zn(2+). Residues threonine 40 and histidine 43 each act as charge relay system in the active site. Positions 63, 64, 93, 96, 99, and 107 each coordinate Zn(2+). Residues isoleucine 175, aspartate 195, arginine 200, 262-264 (LGI), and 286-287 (IY) contribute to the NAD(+) site.

This sequence belongs to the zinc-containing alcohol dehydrogenase family. As to quaternary structure, homotetramer. It depends on Zn(2+) as a cofactor.

It localises to the cytoplasm. It carries out the reaction L-threonine + NAD(+) = (2S)-2-amino-3-oxobutanoate + NADH + H(+). Its pathway is amino-acid degradation; L-threonine degradation via oxydo-reductase pathway; glycine from L-threonine: step 1/2. Functionally, catalyzes the NAD(+)-dependent oxidation of L-threonine to 2-amino-3-ketobutyrate. The chain is L-threonine 3-dehydrogenase from Legionella pneumophila (strain Corby).